A 163-amino-acid polypeptide reads, in one-letter code: Nucleotide-binding protein BPUM_1028 (163 aa).

This sequence belongs to the YajQ family.

Its function is as follows. Nucleotide-binding protein. This is Nucleotide-binding protein BPUM_1028 from Bacillus pumilus (strain SAFR-032).